A 361-amino-acid chain; its full sequence is uncharacterized protein (361 aa).

This is an uncharacterized protein from Escherichia coli (strain K12).